Reading from the N-terminus, the 572-residue chain is Asparagine--tRNA ligase, cytoplasmic 1 (572 aa).

A2 carries the post-translational modification N-acetylalanine. A DNA-binding region (OB) is located at residues 53 to 131; that stretch reads VRIGGWVKSG…QQIELNVVKV (79 aa). The region spanning 236 to 292 is the WHEP-TRS domain; it reads DVEAARLIVIERGNVVAELKAAKASKEAITAAVAELKIAKETFAHIDERSRLRPGLP.

The protein belongs to the class-II aminoacyl-tRNA synthetase family.

It localises to the cytoplasm. The protein resides in the cytosol. The enzyme catalyses tRNA(Asn) + L-asparagine + ATP = L-asparaginyl-tRNA(Asn) + AMP + diphosphate + H(+). This Arabidopsis thaliana (Mouse-ear cress) protein is Asparagine--tRNA ligase, cytoplasmic 1.